Reading from the N-terminus, the 292-residue chain is Calcium-binding protein CBP (292 aa).

Residues 1 to 80 form a disordered region; sequence MAGYPPNPGS…YGSGGGYGAP (80 aa). A compositionally biased stretch (gly residues) spans 12-21; that stretch reads YPYGGAGGYG. Pro residues predominate over residues 22–40; that stretch reads APPPPYGSSPAPSAPPYGA. EF-hand domains follow at residues 121–156 and 187–222; these read GTDP…YSQS and YSLQ…LGYS. The Ca(2+) site is built by aspartate 134, aspartate 136, serine 138, methionine 140, glutamate 145, aspartate 200, aspartate 202, serine 204, lysine 206, and glutamate 211.

Potential calcium sensor. In Oryza sativa subsp. japonica (Rice), this protein is Calcium-binding protein CBP.